The following is a 311-amino-acid chain: Ribosomal protein L11 methyltransferase (311 aa).

4 residues coordinate S-adenosyl-L-methionine: Thr162, Gly183, Asp205, and Asn248.

The protein belongs to the methyltransferase superfamily. PrmA family.

The protein localises to the cytoplasm. The catalysed reaction is L-lysyl-[protein] + 3 S-adenosyl-L-methionine = N(6),N(6),N(6)-trimethyl-L-lysyl-[protein] + 3 S-adenosyl-L-homocysteine + 3 H(+). Functionally, methylates ribosomal protein L11. This is Ribosomal protein L11 methyltransferase from Bacillus velezensis (strain DSM 23117 / BGSC 10A6 / LMG 26770 / FZB42) (Bacillus amyloliquefaciens subsp. plantarum).